The primary structure comprises 123 residues: Large ribosomal subunit protein bL12 (123 aa).

Belongs to the bacterial ribosomal protein bL12 family. As to quaternary structure, homodimer. Part of the ribosomal stalk of the 50S ribosomal subunit. Forms a multimeric L10(L12)X complex, where L10 forms an elongated spine to which 2 to 4 L12 dimers bind in a sequential fashion. Binds GTP-bound translation factors.

In terms of biological role, forms part of the ribosomal stalk which helps the ribosome interact with GTP-bound translation factors. Is thus essential for accurate translation. The chain is Large ribosomal subunit protein bL12 from Rhodospirillum rubrum (strain ATCC 11170 / ATH 1.1.1 / DSM 467 / LMG 4362 / NCIMB 8255 / S1).